The chain runs to 315 residues: Ribosomal RNA small subunit methyltransferase H (315 aa).

S-adenosyl-L-methionine is bound by residues 34–36 (GGH), D53, D100, and H107.

The protein belongs to the methyltransferase superfamily. RsmH family.

The protein resides in the cytoplasm. It catalyses the reaction cytidine(1402) in 16S rRNA + S-adenosyl-L-methionine = N(4)-methylcytidine(1402) in 16S rRNA + S-adenosyl-L-homocysteine + H(+). Functionally, specifically methylates the N4 position of cytidine in position 1402 (C1402) of 16S rRNA. This Treponema denticola (strain ATCC 35405 / DSM 14222 / CIP 103919 / JCM 8153 / KCTC 15104) protein is Ribosomal RNA small subunit methyltransferase H.